A 330-amino-acid chain; its full sequence is Exostosin-like 2 (330 aa).

The Cytoplasmic portion of the chain corresponds to 1-22; the sequence is MRCCHICKLPGRVMGIRVLRLS. Residues 23–43 traverse the membrane as a helical; Signal-anchor for type II membrane protein segment; sequence LVVILVLLLVAGALTALLPSV. Residues 44-330 lie on the Lumenal side of the membrane; sequence KEDKMLMLRR…FPYANYKRKI (287 aa). Gln71 lines the UDP-N-acetyl-alpha-D-galactosamine pocket. Residue Gln71 participates in UDP-N-acetyl-alpha-D-glucosamine binding. Residue Asn74 is glycosylated (N-linked (GlcNAc...) asparagine). Arg75, Asn100, Asn129, Arg134, Asp150, Asp151, Asp152, and Asp244 together coordinate UDP-N-acetyl-alpha-D-galactosamine. UDP-N-acetyl-alpha-D-glucosamine-binding residues include Arg75, Asn100, Asn129, Arg134, Asp150, Asp151, Asp152, Asp244, Asp245, and Arg293. Asp152 is a Mn(2+) binding site. Residues Cys243 and Cys296 are joined by a disulfide bond. Asp245 is an active-site residue. A UDP-N-acetyl-alpha-D-galactosamine-binding site is contributed by Arg293.

The protein belongs to the glycosyltransferase 47 family. Mn(2+) is required as a cofactor. Post-translationally, the soluble form derives from the membrane form by proteolytic processing. As to expression, ubiquitous.

The protein resides in the endoplasmic reticulum membrane. The protein localises to the secreted. The catalysed reaction is 3-O-(beta-D-GlcA-(1-&gt;3)-beta-D-Gal-(1-&gt;3)-beta-D-Gal-(1-&gt;4)-beta-D-Xyl)-L-seryl-[protein] + UDP-N-acetyl-alpha-D-glucosamine = 3-O-(alpha-D-GlcNAc-(1-&gt;4)-beta-D-GlcA-(1-&gt;3)-beta-D-Gal-(1-&gt;3)-beta-D-Gal-(1-&gt;4)-beta-D-Xyl)-L-seryl-[protein] + UDP + H(+). It participates in glycan metabolism; heparan sulfate biosynthesis. Glycosyltransferase required for the biosynthesis of heparan-sulfate and responsible for the alternating addition of beta-1-4-linked glucuronic acid (GlcA) and alpha-1-4-linked N-acetylglucosamine (GlcNAc) units to nascent heparan sulfate chains. The sequence is that of Exostosin-like 2 (EXTL2) from Homo sapiens (Human).